The sequence spans 313 residues: Coproporphyrin III ferrochelatase (313 aa).

Positions 191 and 270 each coordinate Fe(2+).

The protein belongs to the ferrochelatase family.

It is found in the cytoplasm. The catalysed reaction is Fe-coproporphyrin III + 2 H(+) = coproporphyrin III + Fe(2+). The protein operates within porphyrin-containing compound metabolism; protoheme biosynthesis. Functionally, involved in coproporphyrin-dependent heme b biosynthesis. Catalyzes the insertion of ferrous iron into coproporphyrin III to form Fe-coproporphyrin III. The sequence is that of Coproporphyrin III ferrochelatase from Enterococcus faecalis (strain ATCC 700802 / V583).